The primary structure comprises 355 residues: Chorismate synthase (355 aa).

Residue R48 participates in NADP(+) binding. FMN contacts are provided by residues 126 to 128, G278, 293 to 297, and R319; these read RSS and KPIPS.

Belongs to the chorismate synthase family. Homotetramer. FMNH2 serves as cofactor.

It catalyses the reaction 5-O-(1-carboxyvinyl)-3-phosphoshikimate = chorismate + phosphate. The protein operates within metabolic intermediate biosynthesis; chorismate biosynthesis; chorismate from D-erythrose 4-phosphate and phosphoenolpyruvate: step 7/7. Functionally, catalyzes the anti-1,4-elimination of the C-3 phosphate and the C-6 proR hydrogen from 5-enolpyruvylshikimate-3-phosphate (EPSP) to yield chorismate, which is the branch point compound that serves as the starting substrate for the three terminal pathways of aromatic amino acid biosynthesis. This reaction introduces a second double bond into the aromatic ring system. The chain is Chorismate synthase from Oleidesulfovibrio alaskensis (strain ATCC BAA-1058 / DSM 17464 / G20) (Desulfovibrio alaskensis).